A 298-amino-acid polypeptide reads, in one-letter code: Isochorismatase domain-containing protein 1 (298 aa).

A Phosphotyrosine modification is found at Tyr160. N6-succinyllysine is present on Lys279.

Belongs to the isochorismatase family.

This is Isochorismatase domain-containing protein 1 (ISOC1) from Bos taurus (Bovine).